A 1267-amino-acid chain; its full sequence is BOS complex subunit NOMO2 (1267 aa).

The signal sequence occupies residues 1–31 (MLVGQGAGLLGPAVVTAAVVLLLSGVGPAHG). The Lumenal segment spans residues 32–1155 (SEDIVVGCGG…NPTRKLPEQD (1124 aa)). N-linked (GlcNAc...) asparagine glycosylation is found at N50, N218, and N618. Residues 1156-1176 (IAQGSYIALPLTLLVLLAGYN) traverse the membrane as a helical segment. Residues 1177-1267 (HDKLIPLLLQ…LETTATCIHY (91 aa)) are Cytoplasmic-facing. Residues 1198–1219 (GQAASDNSGPEDAKRQAKKQKT) are disordered.

Component of the back of Sec61 (BOS) complex, composed of NCLN/Nicalin, NOMO (NOMO1, NOMO2 or NOMO3) and TMEM147. The BOS complex is part of the multi-pass translocon (MPT) complex, composed of three subcomplexes, the GEL complex (composed of RAB5IF/OPTI and TMCO1), the BOS complex (composed of NCLN/Nicalin, NOMO and TMEM147) and the PAT complex (composed of WDR83OS/Asterix and CCDC47). The MPT complex associates with the SEC61 complex. Due to the strong similarity between NOMO1, NOMO2 and NOMO3, similar interaction pattern probably occur for the three gene copies. Highly expressed in pancreas and skeletal muscle and, at lower levels, in heart.

The protein localises to the endoplasmic reticulum membrane. Its function is as follows. Component of the multi-pass translocon (MPT) complex that mediates insertion of multi-pass membrane proteins into the lipid bilayer of membranes. The MPT complex takes over after the SEC61 complex: following membrane insertion of the first few transmembrane segments of proteins by the SEC61 complex, the MPT complex occludes the lateral gate of the SEC61 complex to promote insertion of subsequent transmembrane regions. In Homo sapiens (Human), this protein is BOS complex subunit NOMO2 (NOMO2).